Here is a 728-residue protein sequence, read N- to C-terminus: Procollagen-lysine,2-oxoglutarate 5-dioxygenase 1 (728 aa).

Residues 1 to 18 (MRSLLLLAPLAWLLLVQA) form the signal peptide. N-linked (GlcNAc...) asparagine glycosylation is found at Asn-198 and Asn-539. The region spanning 637–728 (QFDLAFVVRY…RYIAVSFVDP (92 aa)) is the Fe2OG dioxygenase domain. 2 residues coordinate Fe cation: His-657 and Asp-659. An N-linked (GlcNAc...) asparagine glycan is attached at Asn-687. His-709 provides a ligand contact to Fe cation. The active site involves Arg-719.

As to quaternary structure, homodimer. Identified in a complex with P3H3 and P3H4. Fe(2+) is required as a cofactor. L-ascorbate serves as cofactor. As to expression, highly expressed in the liver, heart, lung, skeletal muscle and kidney.

It is found in the rough endoplasmic reticulum membrane. It catalyses the reaction L-lysyl-[collagen] + 2-oxoglutarate + O2 = (5R)-5-hydroxy-L-lysyl-[collagen] + succinate + CO2. Its function is as follows. Part of a complex composed of PLOD1, P3H3 and P3H4 that catalyzes hydroxylation of lysine residues in collagen alpha chains and is required for normal assembly and cross-linkling of collagen fibrils. Forms hydroxylysine residues in -Xaa-Lys-Gly- sequences in collagens. These hydroxylysines serve as sites of attachment for carbohydrate units and are essential for the stability of the intermolecular collagen cross-links. This chain is Procollagen-lysine,2-oxoglutarate 5-dioxygenase 1 (Plod1), found in Mus musculus (Mouse).